Here is a 206-residue protein sequence, read N- to C-terminus: Potassium-transporting ATPase KdpC subunit (206 aa).

The chain crosses the membrane as a helical span at residues 14–34 (VLAVFTLFGLGLAYSLIATGI).

It belongs to the KdpC family. In terms of assembly, the system is composed of three essential subunits: KdpA, KdpB and KdpC.

It localises to the cell inner membrane. In terms of biological role, part of the high-affinity ATP-driven potassium transport (or Kdp) system, which catalyzes the hydrolysis of ATP coupled with the electrogenic transport of potassium into the cytoplasm. This subunit acts as a catalytic chaperone that increases the ATP-binding affinity of the ATP-hydrolyzing subunit KdpB by the formation of a transient KdpB/KdpC/ATP ternary complex. The polypeptide is Potassium-transporting ATPase KdpC subunit (Xanthomonas axonopodis pv. citri (strain 306)).